We begin with the raw amino-acid sequence, 264 residues long: Putative ankyrin repeat domain-containing protein 19 (264 aa).

5 ANK repeats span residues 67 to 96 (KDRT…QINI), 100 to 129 (LNRT…NPNI), 133 to 162 (YSNT…NIEA), 166 to 195 (EGNT…NLHA), and 199 to 228 (FRRT…NIFS).

This Homo sapiens (Human) protein is Putative ankyrin repeat domain-containing protein 19 (ANKRD19P).